The sequence spans 299 residues: GTP cyclohydrolase FolE2 (299 aa).

It belongs to the GTP cyclohydrolase IV family.

It catalyses the reaction GTP + H2O = 7,8-dihydroneopterin 3'-triphosphate + formate + H(+). It participates in cofactor biosynthesis; 7,8-dihydroneopterin triphosphate biosynthesis; 7,8-dihydroneopterin triphosphate from GTP: step 1/1. Converts GTP to 7,8-dihydroneopterin triphosphate. The protein is GTP cyclohydrolase FolE2 of Klebsiella pneumoniae.